The primary structure comprises 279 residues: Energy-coupling factor transporter ATP-binding protein EcfA2 (279 aa).

The ABC transporter domain maps to 3-245 (ITLKNVSYTY…LDFMESIQLG (243 aa)). 40-47 (GHTGSGKS) lines the ATP pocket.

It belongs to the ABC transporter superfamily. Energy-coupling factor EcfA family. In terms of assembly, forms a stable energy-coupling factor (ECF) transporter complex composed of 2 membrane-embedded substrate-binding proteins (S component), 2 ATP-binding proteins (A component) and 2 transmembrane proteins (T component).

Its subcellular location is the cell membrane. Functionally, ATP-binding (A) component of a common energy-coupling factor (ECF) ABC-transporter complex. Unlike classic ABC transporters this ECF transporter provides the energy necessary to transport a number of different substrates. This Streptococcus sanguinis (strain SK36) protein is Energy-coupling factor transporter ATP-binding protein EcfA2.